We begin with the raw amino-acid sequence, 729 residues long: Cytoplasmic polyadenylation element-binding protein 4 (729 aa).

Disordered regions lie at residues 20-49 (FPVR…NNNT) and 78-133 (EKAK…KEKI). A compositionally biased stretch (basic residues) spans 24–35 (FHPHLQPPHHHQ). Residues 83–96 (QQQEQQDPLEKQQL) show a composition bias toward low complexity. Phosphoserine is present on residues Ser-97, Ser-99, and Ser-137. A disordered region spans residues 218–328 (FGGSFSPQIG…RGLNGGITPL (111 aa)). Over residues 232 to 249 (HHPHHPHFQHHHSQHQQQ) the composition is skewed to basic residues. A phosphoserine mark is found at Ser-252 and Ser-255. The span at 285 to 300 (WSSYQSPSPTPSSSWS) shows a compositional bias: low complexity. The segment covering 301–313 (PGGGGYGGWGGSQ) has biased composition (gly residues). Thr-326 bears the Phosphothreonine mark. Phosphoserine is present on residues Ser-330 and Ser-332. 2 consecutive RRM domains span residues 472–563 (RKVF…PWNL) and 580–662 (KTIF…PYVL). The RNA-binding stretch occupies residues 541-543 (KLY). The Zn(2+) site is built by Cys-667, Cys-675, Cys-684, Cys-689, Cys-694, Cys-697, His-702, and His-710.

The protein belongs to the RRM CPEB family. In terms of assembly, interacts with TOB1. In terms of tissue distribution, expressed in pancreas in islets and ductal cells (at protein level). Expressed in melanocytes.

It localises to the cytoplasm. The protein resides in the cell projection. Its subcellular location is the dendrite. The protein localises to the dendritic spine. It is found in the postsynaptic density. It localises to the axon. The protein resides in the growth cone. Its subcellular location is the endoplasmic reticulum. The protein localises to the perinuclear region. Functionally, sequence-specific RNA-binding protein that binds to the cytoplasmic polyadenylation element (CPE), an uridine-rich sequence element (consensus sequence 5'-UUUUUAU-3') within the mRNA 3'-UTR. RNA binding results in a clear conformational change analogous to the Venus fly trap mechanism. Regulates activation of unfolded protein response (UPR) in the process of adaptation to ER stress in liver, by maintaining translation of CPE-regulated mRNAs in conditions in which global protein synthesis is inhibited. Required for cell cycle progression, specifically for cytokinesis and chromosomal segregation. Plays a role as an oncogene promoting tumor growth and progression by positively regulating translation of t-plasminogen activator/PLAT. Stimulates proliferation of melanocytes. In contrast to CPEB1 and CPEB3, does not play role in synaptic plasticity, learning and memory. The polypeptide is Cytoplasmic polyadenylation element-binding protein 4 (CPEB4) (Homo sapiens (Human)).